A 92-amino-acid polypeptide reads, in one-letter code: QEQGTNPSQEQNVPLPRNYKQALETNTPTKTSWPELVGVTAEQAETKIKEEMVDVQIQVSPHDSFVTADYNPKRVRLYVDESNKVTRTPSIG.

A compositionally biased stretch (polar residues) spans 1–12; sequence QEQGTNPSQEQN. The interval 1–31 is disordered; sequence QEQGTNPSQEQNVPLPRNYKQALETNTPTKT.

The protein belongs to the protease inhibitor I13 (potato type I serine protease inhibitor) family.

In terms of biological role, inhibitor of subtilisin. This is Subtilisin inhibitor 1 from Phaseolus angularis (Azuki bean).